We begin with the raw amino-acid sequence, 391 residues long: Heme A synthase (391 aa).

8 helical membrane-spanning segments follow: residues isoleucine 37 to leucine 57, arginine 121 to alanine 141, leucine 152 to serine 172, leucine 186 to leucine 206, threonine 229 to isoleucine 249, phenylalanine 298 to glycine 318, leucine 332 to alanine 352, and tryptophan 354 to alanine 374. Histidine 300 lines the heme pocket. Position 360 (histidine 360) interacts with heme.

This sequence belongs to the COX15/CtaA family. Type 2 subfamily. In terms of assembly, interacts with CtaB. Requires heme b as cofactor.

It localises to the cell membrane. The catalysed reaction is Fe(II)-heme o + 2 A + H2O = Fe(II)-heme a + 2 AH2. The protein operates within porphyrin-containing compound metabolism; heme A biosynthesis; heme A from heme O: step 1/1. In terms of biological role, catalyzes the conversion of heme O to heme A by two successive hydroxylations of the methyl group at C8. The first hydroxylation forms heme I, the second hydroxylation results in an unstable dihydroxymethyl group, which spontaneously dehydrates, resulting in the formyl group of heme A. In Cereibacter sphaeroides (strain ATCC 17023 / DSM 158 / JCM 6121 / CCUG 31486 / LMG 2827 / NBRC 12203 / NCIMB 8253 / ATH 2.4.1.) (Rhodobacter sphaeroides), this protein is Heme A synthase.